Here is a 24-residue protein sequence, read N- to C-terminus: Osteocalcin (24 aa).

In terms of domain architecture, Gla spans 1 to 24 (REVCELNPDCDELADHIGFQEAYR). Ca(2+)-binding residues include Glu-2, Glu-5, and Asp-11. A 4-carboxyglutamate mark is found at Glu-2 and Glu-5. The cysteines at positions 4 and 10 are disulfide-linked.

This sequence belongs to the osteocalcin/matrix Gla protein family. Gamma-carboxyglutamate residues are formed by vitamin K dependent carboxylation by GGCX. These residues are essential for the binding of calcium. Decarboxylation promotes the hormone activity.

It is found in the secreted. The carboxylated form is one of the main organic components of the bone matrix, which constitutes 1-2% of the total bone protein: it acts as a negative regulator of bone formation and is required to limit bone formation without impairing bone resorption or mineralization. The carboxylated form binds strongly to apatite and calcium. Functionally, the uncarboxylated form acts as a hormone secreted by osteoblasts, which regulates different cellular processes, such as energy metabolism, male fertility and brain development. Regulates of energy metabolism by acting as a hormone favoring pancreatic beta-cell proliferation, insulin secretion and sensitivity and energy expenditure. Uncarboxylated osteocalcin hormone also promotes testosterone production in the testes: acts as a ligand for G protein-coupled receptor GPRC6A at the surface of Leydig cells, initiating a signaling response that promotes the expression of enzymes required for testosterone synthesis in a CREB-dependent manner. Also acts as a regulator of brain development: osteocalcin hormone crosses the blood-brain barrier and acts as a ligand for GPR158 on neurons, initiating a signaling response that prevents neuronal apoptosis in the hippocampus, favors the synthesis of all monoamine neurotransmitters and inhibits that of gamma-aminobutyric acid (GABA). Osteocalcin also crosses the placenta during pregnancy and maternal osteocalcin is required for fetal brain development. This chain is Osteocalcin, found in Homo sapiens neanderthalensis (Neanderthal).